The primary structure comprises 352 residues: Spermidine/putrescine import ATP-binding protein PotA (352 aa).

The ABC transporter domain maps to 7-237 (IELKNVSKKY…PKNKFVANFI (231 aa)). An ATP-binding site is contributed by 39–46 (GPSGCGKT).

This sequence belongs to the ABC transporter superfamily. Spermidine/putrescine importer (TC 3.A.1.11.1) family. The complex is composed of two ATP-binding proteins (PotA), two transmembrane proteins (PotB and PotC) and a solute-binding protein (PotD).

It is found in the cell membrane. It carries out the reaction ATP + H2O + polyamine-[polyamine-binding protein]Side 1 = ADP + phosphate + polyamineSide 2 + [polyamine-binding protein]Side 1.. Its function is as follows. Part of the ABC transporter complex PotABCD involved in spermidine/putrescine import. Responsible for energy coupling to the transport system. The polypeptide is Spermidine/putrescine import ATP-binding protein PotA (Clostridium acetobutylicum (strain ATCC 824 / DSM 792 / JCM 1419 / IAM 19013 / LMG 5710 / NBRC 13948 / NRRL B-527 / VKM B-1787 / 2291 / W)).